Reading from the N-terminus, the 131-residue chain is Small ribosomal subunit protein uS8 (131 aa).

This sequence belongs to the universal ribosomal protein uS8 family. In terms of assembly, part of the 30S ribosomal subunit. Contacts proteins S5 and S12.

Its function is as follows. One of the primary rRNA binding proteins, it binds directly to 16S rRNA central domain where it helps coordinate assembly of the platform of the 30S subunit. The polypeptide is Small ribosomal subunit protein uS8 (Vesicomyosocius okutanii subsp. Calyptogena okutanii (strain HA)).